The chain runs to 471 residues: ATP synthase subunit beta (471 aa).

154–161 contributes to the ATP binding site; it reads GGAGVGKT.

Belongs to the ATPase alpha/beta chains family. In terms of assembly, F-type ATPases have 2 components, CF(1) - the catalytic core - and CF(0) - the membrane proton channel. CF(1) has five subunits: alpha(3), beta(3), gamma(1), delta(1), epsilon(1). CF(0) has three main subunits: a(1), b(2) and c(9-12). The alpha and beta chains form an alternating ring which encloses part of the gamma chain. CF(1) is attached to CF(0) by a central stalk formed by the gamma and epsilon chains, while a peripheral stalk is formed by the delta and b chains.

The protein resides in the cell membrane. It catalyses the reaction ATP + H2O + 4 H(+)(in) = ADP + phosphate + 5 H(+)(out). Produces ATP from ADP in the presence of a proton gradient across the membrane. The catalytic sites are hosted primarily by the beta subunits. The sequence is that of ATP synthase subunit beta from Mesomycoplasma hyopneumoniae (strain J / ATCC 25934 / NCTC 10110) (Mycoplasma hyopneumoniae).